The primary structure comprises 931 residues: Bifunctional glutamine synthetase adenylyltransferase/adenylyl-removing enzyme (931 aa).

The tract at residues 1–434 (MTLAPADLPA…STEFAALLAP (434 aa)) is adenylyl removase. The adenylyl transferase stretch occupies residues 441–931 (PDALANYWRS…ACIAAELPFA (491 aa)).

It belongs to the GlnE family. Mg(2+) is required as a cofactor.

The catalysed reaction is [glutamine synthetase]-O(4)-(5'-adenylyl)-L-tyrosine + phosphate = [glutamine synthetase]-L-tyrosine + ADP. It catalyses the reaction [glutamine synthetase]-L-tyrosine + ATP = [glutamine synthetase]-O(4)-(5'-adenylyl)-L-tyrosine + diphosphate. Its function is as follows. Involved in the regulation of glutamine synthetase GlnA, a key enzyme in the process to assimilate ammonia. When cellular nitrogen levels are high, the C-terminal adenylyl transferase (AT) inactivates GlnA by covalent transfer of an adenylyl group from ATP to specific tyrosine residue of GlnA, thus reducing its activity. Conversely, when nitrogen levels are low, the N-terminal adenylyl removase (AR) activates GlnA by removing the adenylyl group by phosphorolysis, increasing its activity. The regulatory region of GlnE binds the signal transduction protein PII (GlnB) which indicates the nitrogen status of the cell. The protein is Bifunctional glutamine synthetase adenylyltransferase/adenylyl-removing enzyme of Stenotrophomonas maltophilia (strain R551-3).